The chain runs to 89 residues: MKAIITVIGKDKVGIIAGVSSILAEMKINILDISQTIMQEYFTMIMLTDLSCSVVSFDKVKTELDEKGKKLGVSIKIQDEGIFNSMNRV.

One can recognise an ACT domain in the interval 4–78; that stretch reads IITVIGKDKV…KKLGVSIKIQ (75 aa).

Belongs to the UPF0237 family.

This chain is UPF0237 protein CA_C0478, found in Clostridium acetobutylicum (strain ATCC 824 / DSM 792 / JCM 1419 / IAM 19013 / LMG 5710 / NBRC 13948 / NRRL B-527 / VKM B-1787 / 2291 / W).